The sequence spans 276 residues: Large ribosomal subunit protein uL2 (276 aa).

The disordered stretch occupies residues 219 to 276 (TVRGSAMNPNDHPHGGGEGRTSIGRPAPVTPWGKPALGYKTRDSKKASNKMIVSRRKK).

The protein belongs to the universal ribosomal protein uL2 family. In terms of assembly, part of the 50S ribosomal subunit. Forms a bridge to the 30S subunit in the 70S ribosome.

In terms of biological role, one of the primary rRNA binding proteins. Required for association of the 30S and 50S subunits to form the 70S ribosome, for tRNA binding and peptide bond formation. It has been suggested to have peptidyltransferase activity; this is somewhat controversial. Makes several contacts with the 16S rRNA in the 70S ribosome. This is Large ribosomal subunit protein uL2 from Alkaliphilus oremlandii (strain OhILAs) (Clostridium oremlandii (strain OhILAs)).